A 38-amino-acid chain; its full sequence is Photosystem II reaction center protein L (38 aa).

A helical membrane pass occupies residues 17-37 (SLYWGLLLIFVLAVLFSSYIF).

It belongs to the PsbL family. In terms of assembly, PSII is composed of 1 copy each of membrane proteins PsbA, PsbB, PsbC, PsbD, PsbE, PsbF, PsbH, PsbI, PsbJ, PsbK, PsbL, PsbM, PsbT, PsbX, PsbY, PsbZ, Psb30/Ycf12, at least 3 peripheral proteins of the oxygen-evolving complex and a large number of cofactors. It forms dimeric complexes.

It is found in the plastid. The protein resides in the chloroplast thylakoid membrane. Its function is as follows. One of the components of the core complex of photosystem II (PSII). PSII is a light-driven water:plastoquinone oxidoreductase that uses light energy to abstract electrons from H(2)O, generating O(2) and a proton gradient subsequently used for ATP formation. It consists of a core antenna complex that captures photons, and an electron transfer chain that converts photonic excitation into a charge separation. This subunit is found at the monomer-monomer interface and is required for correct PSII assembly and/or dimerization. This Oltmannsiellopsis viridis (Marine flagellate) protein is Photosystem II reaction center protein L.